The primary structure comprises 158 residues: Ribosome maturation factor RimP (158 aa).

Belongs to the RimP family.

It is found in the cytoplasm. In terms of biological role, required for maturation of 30S ribosomal subunits. This chain is Ribosome maturation factor RimP, found in Streptococcus suis (strain 05ZYH33).